The primary structure comprises 389 residues: WAT1-related protein At1g21890 (389 aa).

The next 10 helical transmembrane spans lie at 13-33 (LAMI…MVSL), 40-60 (YVLA…FALF), 73-93 (IFLQ…NLYY), 102-122 (TFAS…AIIF), 142-162 (VITV…VDFI), 191-211 (WIPG…FFIL), 225-245 (LTTL…LVTV), 260-280 (FAAA…QGVV), 287-307 (VFVA…GVVV), and 312-332 (IHLG…TVVW). 2 EamA domains span residues 23–150 (AGMY…GALL) and 205–331 (WAGF…YTVV). The disordered stretch occupies residues 339–361 (RMTDDDEDCKGLPIKSPVKPVDT).

The protein belongs to the drug/metabolite transporter (DMT) superfamily. Plant drug/metabolite exporter (P-DME) (TC 2.A.7.4) family.

It localises to the membrane. The sequence is that of WAT1-related protein At1g21890 from Arabidopsis thaliana (Mouse-ear cress).